Consider the following 274-residue polypeptide: Bis(5'-nucleosyl)-tetraphosphatase, symmetrical (274 aa).

Belongs to the Ap4A hydrolase family.

The enzyme catalyses P(1),P(4)-bis(5'-adenosyl) tetraphosphate + H2O = 2 ADP + 2 H(+). Hydrolyzes diadenosine 5',5'''-P1,P4-tetraphosphate to yield ADP. This chain is Bis(5'-nucleosyl)-tetraphosphatase, symmetrical, found in Shewanella sp. (strain MR-7).